The sequence spans 360 residues: Phospho-N-acetylmuramoyl-pentapeptide-transferase (360 aa).

The next 10 helical transmembrane spans lie at 25-45 (RGIL…PWMI), 73-93 (TMGG…WADL), 97-117 (YVWV…VDDY), 142-162 (IGAA…TLIV), 167-187 (SVEI…IVGS), 199-219 (GLAI…CYLS), 236-256 (AGEL…FLWF), 263-283 (VFMG…IAVI), 288-308 (IVLF…MIQV), and 338-358 (VIVR…ATLK).

This sequence belongs to the glycosyltransferase 4 family. MraY subfamily. Requires Mg(2+) as cofactor.

The protein resides in the cell inner membrane. The enzyme catalyses UDP-N-acetyl-alpha-D-muramoyl-L-alanyl-gamma-D-glutamyl-meso-2,6-diaminopimeloyl-D-alanyl-D-alanine + di-trans,octa-cis-undecaprenyl phosphate = di-trans,octa-cis-undecaprenyl diphospho-N-acetyl-alpha-D-muramoyl-L-alanyl-D-glutamyl-meso-2,6-diaminopimeloyl-D-alanyl-D-alanine + UMP. The protein operates within cell wall biogenesis; peptidoglycan biosynthesis. Its function is as follows. Catalyzes the initial step of the lipid cycle reactions in the biosynthesis of the cell wall peptidoglycan: transfers peptidoglycan precursor phospho-MurNAc-pentapeptide from UDP-MurNAc-pentapeptide onto the lipid carrier undecaprenyl phosphate, yielding undecaprenyl-pyrophosphoryl-MurNAc-pentapeptide, known as lipid I. The chain is Phospho-N-acetylmuramoyl-pentapeptide-transferase from Pseudomonas aeruginosa (strain LESB58).